Here is a 118-residue protein sequence, read N- to C-terminus: Large ribosomal subunit protein bL17 (118 aa).

Belongs to the bacterial ribosomal protein bL17 family. Part of the 50S ribosomal subunit. Contacts protein L32.

This is Large ribosomal subunit protein bL17 from Onion yellows phytoplasma (strain OY-M).